Consider the following 115-residue polypeptide: Macrophage migration inhibitory factor homolog (115 aa).

The active-site Proton acceptor; via imino nitrogen is the Pro2. Substrate-binding residues include Lys33 and Ile65.

This sequence belongs to the MIF family.

It is found in the secreted. It catalyses the reaction L-dopachrome = 5,6-dihydroxyindole-2-carboxylate. The catalysed reaction is 3-phenylpyruvate = enol-phenylpyruvate. Its function is as follows. Tautomerization of the methyl ester of L-dopachrome. Inhibits migration of human peripheral blood mononuclear cells. The sequence is that of Macrophage migration inhibitory factor homolog from Brugia malayi (Filarial nematode worm).